A 187-amino-acid polypeptide reads, in one-letter code: Elongation factor P (187 aa).

It belongs to the elongation factor P family.

The protein localises to the cytoplasm. It functions in the pathway protein biosynthesis; polypeptide chain elongation. Functionally, involved in peptide bond synthesis. Stimulates efficient translation and peptide-bond synthesis on native or reconstituted 70S ribosomes in vitro. Probably functions indirectly by altering the affinity of the ribosome for aminoacyl-tRNA, thus increasing their reactivity as acceptors for peptidyl transferase. The sequence is that of Elongation factor P from Prochlorococcus marinus (strain NATL1A).